A 358-amino-acid chain; its full sequence is 3'(2'),5'-bisphosphate nucleotidase 2 (358 aa).

Aspartate 54 acts as the Proton acceptor in catalysis. Residues glutamate 77, aspartate 141, isoleucine 143, and aspartate 144 each contribute to the Mg(2+) site. Catalysis depends on threonine 146, which acts as the Proton acceptor. Adenosine 3',5'-bisphosphate is bound by residues threonine 146, histidine 243, serine 272, lysine 275, arginine 289, and aspartate 302. AMP-binding residues include histidine 243, serine 272, lysine 275, arginine 289, and aspartate 302. Aspartate 302 provides a ligand contact to Mg(2+).

Belongs to the inositol monophosphatase superfamily. It depends on Mg(2+) as a cofactor.

The enzyme catalyses 3'-phosphoadenylyl sulfate + H2O = adenosine 5'-phosphosulfate + phosphate. It catalyses the reaction adenosine 3',5'-bisphosphate + H2O = AMP + phosphate. The catalysed reaction is adenosine 2',5'-bisphosphate + H2O = AMP + phosphate. Its function is as follows. Phosphatase that converts adenosine 3'-phosphate 5'-phosphosulfate (PAPS) to adenosine 5'-phosphosulfate (APS) and 3'(2')-phosphoadenosine 5'-phosphate (PAP) to AMP. Regulates the flux of sulfur in the sulfur-activation pathway by converting PAPS to APS. Involved in salt tolerance. The sequence is that of 3'(2'),5'-bisphosphate nucleotidase 2 (HAL22) from Candida albicans (strain SC5314 / ATCC MYA-2876) (Yeast).